The primary structure comprises 369 residues: Putative gustatory receptor 39b (369 aa).

Residues 1 to 32 (MLYSFHPYLKYFALLGLVPWSESCAQSKFVQK) are Cytoplasmic-facing. A helical membrane pass occupies residues 33-53 (VYSAILIILNAVHFGISIYFP). The Extracellular segment spans residues 54 to 59 (QSAELF). The chain crosses the membrane as a helical span at residues 60–80 (LSLMVNVIVFVARIVCVTVII). Topologically, residues 81 to 122 (LQVMVHYDDYFRFCREMKYLGLRLQCELKIHVGRLKWQSYAK) are cytoplasmic. The chain crosses the membrane as a helical span at residues 123 to 143 (ILALGIGFLVTVLPSIYVALS). The Extracellular portion of the chain corresponds to 144–147 (GSLL). The chain crosses the membrane as a helical span at residues 148 to 168 (YFWSSLLSILIIRMQFVLVLL). Residues 169-224 (NVELLGHHVSLLGIRLQNVLECHLMGANCTLDGNANRLCSLEFLLALKQSHMQLHY) are Cytoplasmic-facing. Residues 225–245 (LFTHFNDLFGWSILGTYVVLF) traverse the membrane as a helical segment. Topologically, residues 246 to 265 (SDSTVNIYWTQQVLVEVYEY) are extracellular. Residues 266-286 (KYLYATFSVFVPSFFNILVFC) traverse the membrane as a helical segment. Residues 287–348 (RCGEFCQRQS…EGFMSTDNSL (62 aa)) lie on the Cytoplasmic side of the membrane. The chain crosses the membrane as a helical span at residues 349–368 (LMSILAAKVTYLIVLMQFSS). Residue valine 369 is a topological domain, extracellular.

The protein belongs to the insect chemoreceptor superfamily. Gustatory receptor (GR) family. Gr2a subfamily. In terms of tissue distribution, expressed in the adult labellar chemosensory neurons and in abdominal ganglions. In larvae, is expressed in neurons of the dorsal and posterior pharyngeal sense organs.

It localises to the cell membrane. Functionally, probable gustatory receptor which mediates acceptance or avoidance behavior, depending on its substrates. Has also atypical sensory function in organ not limited to conventional taste sensing like abdominal ganglions. This chain is Putative gustatory receptor 39b (Gr39b), found in Drosophila melanogaster (Fruit fly).